A 173-amino-acid polypeptide reads, in one-letter code: Ribulose bisphosphate carboxylase small subunit, chloroplastic 3 (173 aa).

The transit peptide at 1-49 directs the protein to the chloroplast; that stretch reads MASIPATVATVAQANMVAPFTGLKSNAAFPVTKKVNDFSTLPSNGGRVQ.

The protein belongs to the RuBisCO small chain family. Heterohexadecamer of 8 large and 8 small subunits.

It localises to the plastid. The protein localises to the chloroplast. RuBisCO catalyzes two reactions: the carboxylation of D-ribulose 1,5-bisphosphate, the primary event in carbon dioxide fixation, as well as the oxidative fragmentation of the pentose substrate. Both reactions occur simultaneously and in competition at the same active site. Although the small subunit is not catalytic it is essential for maximal activity. This Flaveria pringlei protein is Ribulose bisphosphate carboxylase small subunit, chloroplastic 3.